The following is a 474-amino-acid chain: Chromosomal replication initiator protein DnaA (474 aa).

The segment at 1 to 91 is domain I, interacts with DnaA modulators; it reads MSEELWQRCL…STRASTPAAS (91 aa). The disordered stretch occupies residues 89-138; that stretch reads AASYFNGSSSSSSNGPITTPAAAPAPRQPESDSRPQPTSLGGARKHRSNL. The segment at 91–136 is domain II; sequence SYFNGSSSSSSNGPITTPAAAPAPRQPESDSRPQPTSLGGARKHRS. The segment covering 96–113 has biased composition (low complexity); sequence SSSSSSNGPITTPAAAPA. The tract at residues 137–354 is domain III, AAA+ region; sequence NLNTGFTFST…GALRRVIAHV (218 aa). The ATP site is built by Gly-182, Gly-184, Lys-185, and Thr-186. Residues 355–474 form a domain IV, binds dsDNA region; the sequence is RFTGAQIDIG…YLNLLRTLTS (120 aa).

Belongs to the DnaA family. In terms of assembly, oligomerizes as a right-handed, spiral filament on DNA at oriC.

The protein localises to the cytoplasm. Plays an essential role in the initiation and regulation of chromosomal replication. ATP-DnaA binds to the origin of replication (oriC) to initiate formation of the DNA replication initiation complex once per cell cycle. Binds the DnaA box (a 9 base pair repeat at the origin) and separates the double-stranded (ds)DNA. Forms a right-handed helical filament on oriC DNA; dsDNA binds to the exterior of the filament while single-stranded (ss)DNA is stabiized in the filament's interior. The ATP-DnaA-oriC complex binds and stabilizes one strand of the AT-rich DNA unwinding element (DUE), permitting loading of DNA polymerase. After initiation quickly degrades to an ADP-DnaA complex that is not apt for DNA replication. Binds acidic phospholipids. In Alcanivorax borkumensis (strain ATCC 700651 / DSM 11573 / NCIMB 13689 / SK2), this protein is Chromosomal replication initiator protein DnaA.